The chain runs to 149 residues: MGKEKSVRIGRQALLLAMLDEGEEGAILDELRASNWRYCQGRVGAMEPQKIVAAIETAAKRHEVVDGSLYRDMHALYHAILEAVHGVTRGQVELGDLLRTAGLRFAVVRGTPYEQPKEGEWIAVALYGTIGAPVRGLEHEAVGLGINHI.

The protein belongs to the HutP family. As to quaternary structure, homohexamer.

Functionally, antiterminator that binds to cis-acting regulatory sequences on the mRNA in the presence of histidine, thereby suppressing transcription termination and activating the hut operon for histidine utilization. The chain is Hut operon positive regulatory protein from Geobacillus thermodenitrificans (strain NG80-2).